The following is a 120-amino-acid chain: Ribosome-binding factor A (120 aa).

It belongs to the RbfA family. In terms of assembly, monomer. Binds 30S ribosomal subunits, but not 50S ribosomal subunits or 70S ribosomes.

The protein resides in the cytoplasm. In terms of biological role, one of several proteins that assist in the late maturation steps of the functional core of the 30S ribosomal subunit. Associates with free 30S ribosomal subunits (but not with 30S subunits that are part of 70S ribosomes or polysomes). Required for efficient processing of 16S rRNA. May interact with the 5'-terminal helix region of 16S rRNA. The chain is Ribosome-binding factor A from Chlamydia felis (strain Fe/C-56) (Chlamydophila felis).